A 281-amino-acid polypeptide reads, in one-letter code: NAD-dependent protein deacetylase 3 (281 aa).

A Deacetylase sirtuin-type domain is found at 1–281 (MLDSPTLDLL…PWLAEQLITR (281 aa)). NAD(+) contacts are provided by residues 27–47 (GAGISTASGIPDYRDKDGVRR) and 105–108 (QNVD). The active-site Proton acceptor is the His123. Residues Cys131, Cys134, Cys182, and Cys185 each coordinate Zn(2+). Residues 223 to 225 (GTS), 249 to 251 (NHG), and Cys267 each bind NAD(+).

This sequence belongs to the sirtuin family. Class II subfamily. Requires Zn(2+) as cofactor.

It localises to the cytoplasm. The enzyme catalyses N(6)-acetyl-L-lysyl-[protein] + NAD(+) + H2O = 2''-O-acetyl-ADP-D-ribose + nicotinamide + L-lysyl-[protein]. Its function is as follows. NAD-dependent protein deacetylase which modulates the activities of several enzymes which are inactive in their acetylated form. The polypeptide is NAD-dependent protein deacetylase 3 (Pseudomonas syringae pv. tomato (strain ATCC BAA-871 / DC3000)).